The following is a 392-amino-acid chain: Methylthioribose-1-phosphate isomerase (392 aa).

Asp267 serves as the catalytic Proton donor.

This sequence belongs to the eIF-2B alpha/beta/delta subunits family. MtnA subfamily.

It is found in the cytoplasm. The protein resides in the nucleus. It carries out the reaction 5-(methylsulfanyl)-alpha-D-ribose 1-phosphate = 5-(methylsulfanyl)-D-ribulose 1-phosphate. Its pathway is amino-acid biosynthesis; L-methionine biosynthesis via salvage pathway; L-methionine from S-methyl-5-thio-alpha-D-ribose 1-phosphate: step 1/6. Catalyzes the interconversion of methylthioribose-1-phosphate (MTR-1-P) into methylthioribulose-1-phosphate (MTRu-1-P). The polypeptide is Methylthioribose-1-phosphate isomerase (Ajellomyces dermatitidis (strain ER-3 / ATCC MYA-2586) (Blastomyces dermatitidis)).